Consider the following 311-residue polypeptide: tRNA dimethylallyltransferase (311 aa).

12–19 (GPTASGKT) lines the ATP pocket. 14–19 (TASGKT) contributes to the substrate binding site. Interaction with substrate tRNA regions lie at residues 37 to 40 (DSAM) and 161 to 165 (QRIQR).

This sequence belongs to the IPP transferase family. Monomer. Requires Mg(2+) as cofactor.

It carries out the reaction adenosine(37) in tRNA + dimethylallyl diphosphate = N(6)-dimethylallyladenosine(37) in tRNA + diphosphate. Its function is as follows. Catalyzes the transfer of a dimethylallyl group onto the adenine at position 37 in tRNAs that read codons beginning with uridine, leading to the formation of N6-(dimethylallyl)adenosine (i(6)A). The chain is tRNA dimethylallyltransferase from Coxiella burnetii (strain Dugway 5J108-111).